The primary structure comprises 567 residues: Phenylalanine--tRNA ligase beta subunit (567 aa).

One can recognise a B5 domain in the interval Tyr-287–Pro-362. Residues Asp-340, Asp-346, Glu-349, and Asp-350 each coordinate Mg(2+).

The protein belongs to the phenylalanyl-tRNA synthetase beta subunit family. Type 2 subfamily. In terms of assembly, tetramer of two alpha and two beta subunits. It depends on Mg(2+) as a cofactor.

It localises to the cytoplasm. The catalysed reaction is tRNA(Phe) + L-phenylalanine + ATP = L-phenylalanyl-tRNA(Phe) + AMP + diphosphate + H(+). This chain is Phenylalanine--tRNA ligase beta subunit, found in Borreliella afzelii (strain PKo) (Borrelia afzelii).